Reading from the N-terminus, the 326-residue chain is RNA/RNP complex-1-interacting phosphatase (326 aa).

Residues 1–28 (MNQWHYGRYSRGRDFTARAPPKKKGKNQ) form a disordered region. One can recognise a Tyrosine-protein phosphatase domain in the interval 59 to 206 (FEAKLMPEEC…LQKRRVRKNQ (148 aa)). Cys150 functions as the Phosphocysteine intermediate in the catalytic mechanism. Position 151–156 (151–156 (THGLNR)) interacts with substrate. Arg156 (proton donor/acceptor) is an active-site residue. The disordered stretch occupies residues 200–258 (RRVRKNQNASASRSGGLEDSAHLTEQVHTTNKPVNKGPKKSRRGGHLESSQHVQTQSSA). The segment covering 247–258 (ESSQHVQTQSSA) has biased composition (polar residues).

This sequence belongs to the protein-tyrosine phosphatase family. Non-receptor class dual specificity subfamily. As to quaternary structure, monomer. May interact with SFRS7 and SFRS9/SRP30C.

The protein localises to the nucleus. The protein resides in the nucleus speckle. Possesses RNA 5'-triphosphatase and diphosphatase activities, but displays a poor protein-tyrosine phosphatase activity. In addition, has phosphatase activity with ATP, ADP and O-methylfluorescein phosphate (in vitro). Binds to RNA. May participate in nuclear mRNA metabolism. This is RNA/RNP complex-1-interacting phosphatase (Dusp11) from Rattus norvegicus (Rat).